The following is a 330-amino-acid chain: Zinc finger protein Gfi-1b (330 aa).

The SNAG domain stretch occupies residues 1 to 20 (MPRSFLVKSKKAHTYHQPRV). The interval 1–42 (MPRSFLVKSKKAHTYHQPRVQEDEPLWPPALTPVPRDQAPSN) is disordered. Lys8 is modified (N6,N6-dimethyllysine). The interval 91 to 330 (GDSPLSDSPP…RHRESQHNLK (240 aa)) is interaction with ARIH2. 6 C2H2-type zinc fingers span residues 163 to 186 (YHCVKCNKVFSTPHGLEVHVRRSH), 192 to 214 (FACDICGKTFGHAVSLEQHTHVH), 220 to 242 (FECRMCGKAFKRSSTLSTHLLIH), 248 to 270 (YPCQFCGKRFHQKSDMKKHTYIH), 276 to 298 (HKCQVCGKAFSQSSNLITHSRKH), and 304 to 327 (FSCELCTKGFQRKVDLRRHRESQH). Positions 164–330 (HCVKCNKVFS…RHRESQHNLK (167 aa)) are mediates interaction with GATA1.

Component of a RCOR-GFI-KDM1A-HDAC complex. Interacts directly with RCOR1, KDM1A and HDAC2. Forms a complex with GATA1. Interacts with histone methyltransferases EHMT2 and SUV39H1. Interacts with ARIH2 (via RING-type 2). Interacts with RUNX1T1. Methylation at Lys-8 in the SNAG domain seems required for the recruitment of the corepressor complex. Expressed in bone marrow and fetal liver, but also detectable in fetal spleen, fetal thymus, and testes. Detected in hematopoietic stem cells, erythroblasts, and megakaryocytes. Overexpressed in bone marrow of patients with erythroleukemia and megakaryocytic leukemia as well as in their corresponding leukemic cell lines, and markedly repressed in severe aplastic anemia (SAA).

The protein resides in the nucleus. Its function is as follows. Essential proto-oncogenic transcriptional regulator necessary for development and differentiation of erythroid and megakaryocytic lineages. Component of a RCOR-GFI-KDM1A-HDAC complex that suppresses, via histone deacetylase (HDAC) recruitment, a number of genes implicated in multilineage blood cell development and controls hematopoietic differentiation. Transcriptional repressor or activator depending on both promoter and cell type context; represses promoter activity of SOCS1 and SOCS3 and thus, may regulate cytokine signaling pathways. Cooperates with GATA1 to repress target gene transcription, such as the apoptosis regulator BCL2L1; GFI1B silencing in leukemic cell lines markedly increase apoptosis rate. Inhibits down-regulation of MYC and MYB as well as the cyclin-dependent kinase inhibitor CDKN1A/P21WAF1 in IL6-treated myelomonocytic cells. Represses expression of GATA3 in T-cell lymphomas and inhibits GATA1-mediated transcription; as GATA1 also mediates erythroid GFI1B transcription, both GATA1 and GFI1B participate in a feedback regulatory pathway controlling the expression of GFI1B gene in erythroid cells. Suppresses GATA1-mediated stimulation of GFI1B promoter through protein interaction. Binds to gamma-satellite DNA and to its own promoter, auto-repressing its own expression. Alters histone methylation by recruiting histone methyltransferase to target genes promoters. Plays a role in heterochromatin formation. The sequence is that of Zinc finger protein Gfi-1b (GFI1B) from Homo sapiens (Human).